We begin with the raw amino-acid sequence, 577 residues long: F-box-like/WD repeat-containing protein TBL1X (577 aa).

The region spanning 55-87 is the LisH domain; it reads TSDEVNFLVYRYLQESGFSHSAFTFGIESHISQ. An F-box-like domain is found at 92–137; the sequence is GTLVPPAALISILQKGLQYVEAEISINEDGTVFDGRPIESLSLIDA. The residue at position 153 (Lys-153) is an N6-acetyllysine. The disordered stretch occupies residues 177 to 202; it reads TTSAGVSHQNPSKNREATVNGEENRA. Residue Ser-183 is modified to Phosphoserine. 8 WD repeats span residues 230–269, 286–325, 327–366, 369–409, 410–449, 452–500, 503–542, and 544–576; these read GHESEVFICAWNPVSDLLASGSGDSTARIWNLNENSNGGS, PSNKDVTSLDWNTNGTLLATGSYDGFARIWTEDGNLASTL, QHKGPIFALKWNRKGNYILSAGVDKTTIIWDAHTGEAKQQ, FHSA…KTFQ, GHTNEVNAIKWDPSGMLLASCSDDMTLKIWSMKQEVCIHD, AHNK…CTHT, KHQEPVYSVAFSPDGKYLASGSFDKCVHIWNTQSGNLVHS, and RGTGGIFEVCWNARGDKVGASASDGSVCVLDLR. Residue Lys-340 forms a Glycyl lysine isopeptide (Lys-Gly) (interchain with G-Cter in SUMO2) linkage.

It belongs to the WD repeat EBI family. In terms of assembly, homotetramer; dimer of dimers. Component of the N-Cor repressor complex, at least composed of NCOR1, NCOR2, HDAC3, TBL1X, TBL1R, CORO2A and GPS2. Interacts with GPS2 (when sumoylated); leading to protect GPS2 against degradation by the proteasome. Component of a E3 ubiquitin ligase complex containing UBE2D1, SIAH1, CACYBP/SIP, SKP1, APC and TBL1X. Probably part of other corepressor complexes, that do not contain NCOR1 and NCOR2. Interacts with histones H2B, H3a and H4. Interacts with MECP2; recruits TBL1X to the heterochromatin foci. Interacts with USP44. In terms of tissue distribution, ubiquitous.

It is found in the nucleus. Functionally, F-box-like protein involved in the recruitment of the ubiquitin/19S proteasome complex to nuclear receptor-regulated transcription units. Plays an essential role in transcription activation mediated by nuclear receptors. Probably acts as integral component of corepressor complexes that mediates the recruitment of the 19S proteasome complex, leading to the subsequent proteasomal degradation of transcription repressor complexes, thereby allowing cofactor exchange. This is F-box-like/WD repeat-containing protein TBL1X (TBL1X) from Homo sapiens (Human).